Here is a 403-residue protein sequence, read N- to C-terminus: Acetylornithine/succinyldiaminopimelate aminotransferase (403 aa).

Pyridoxal 5'-phosphate-binding positions include 107-108 (GA) and Phe140. Arg143 contributes to the N(2)-acetyl-L-ornithine binding site. Residue 225–228 (DEVQ) coordinates pyridoxal 5'-phosphate. Lys254 is modified (N6-(pyridoxal phosphate)lysine). N(2)-acetyl-L-ornithine is bound at residue Thr282. Thr283 contributes to the pyridoxal 5'-phosphate binding site.

It belongs to the class-III pyridoxal-phosphate-dependent aminotransferase family. ArgD subfamily. In terms of assembly, homodimer. The cofactor is pyridoxal 5'-phosphate.

It localises to the cytoplasm. The enzyme catalyses N(2)-acetyl-L-ornithine + 2-oxoglutarate = N-acetyl-L-glutamate 5-semialdehyde + L-glutamate. It catalyses the reaction N-succinyl-(2S,6S)-2,6-diaminopimelate + 2-oxoglutarate = (S)-2-succinylamino-6-oxoheptanedioate + L-glutamate. It participates in amino-acid biosynthesis; L-arginine biosynthesis; N(2)-acetyl-L-ornithine from L-glutamate: step 4/4. It functions in the pathway amino-acid biosynthesis; L-lysine biosynthesis via DAP pathway; LL-2,6-diaminopimelate from (S)-tetrahydrodipicolinate (succinylase route): step 2/3. Involved in both the arginine and lysine biosynthetic pathways. The chain is Acetylornithine/succinyldiaminopimelate aminotransferase from Photorhabdus laumondii subsp. laumondii (strain DSM 15139 / CIP 105565 / TT01) (Photorhabdus luminescens subsp. laumondii).